The sequence spans 422 residues: 26S proteasome non-ATPase regulatory subunit 11 (422 aa).

A2 is subject to N-acetylalanine. Phosphoserine occurs at positions 14 and 23. The PCI domain occupies 224-392 (DWKTAYSYFY…GVLIIFDEPP (169 aa)). A Glycyl lysine isopeptide (Lys-Gly) (interchain with G-Cter in SUMO2) cross-link involves residue K274.

This sequence belongs to the proteasome subunit S9 family. Component of the 19S proteasome regulatory particle complex. The 26S proteasome consists of a 20S core particle (CP) and two 19S regulatory subunits (RP). The regulatory particle is made of a lid composed of 9 subunits including PSMD11, a base containing 6 ATPases and few additional components. In terms of processing, phosphorylated by AMPK.

The protein resides in the nucleus. The protein localises to the cytoplasm. It localises to the cytosol. In terms of biological role, component of the 26S proteasome, a multiprotein complex involved in the ATP-dependent degradation of ubiquitinated proteins. This complex plays a key role in the maintenance of protein homeostasis by removing misfolded or damaged proteins, which could impair cellular functions, and by removing proteins whose functions are no longer required. Therefore, the proteasome participates in numerous cellular processes, including cell cycle progression, apoptosis, or DNA damage repair. In the complex, PSMD11 is required for proteasome assembly. Plays a key role in increased proteasome activity in embryonic stem cells (ESCs): its high expression in ESCs promotes enhanced assembly of the 26S proteasome, followed by higher proteasome activity. This is 26S proteasome non-ATPase regulatory subunit 11 (PSMD11) from Bos taurus (Bovine).